The following is a 229-amino-acid chain: Synaptogyrin-3 (229 aa).

Met-1 bears the N-acetylmethionine mark. In terms of domain architecture, MARVEL spans 20–172 (FARRPQTLLR…LTVKALQRFR (153 aa)). 4 consecutive transmembrane segments (helical) span residues 30 to 50 (VASW…GYVN), 70 to 90 (FGVA…LLDV), 105 to 125 (VLLD…GFCF), and 148 to 168 (AAIA…VKAL). Residues 209–219 (QSPPFTETLDT) are compositionally biased toward polar residues. A disordered region spans residues 209 to 229 (QSPPFTETLDTSPKGYQVPAY).

This sequence belongs to the synaptogyrin family. Interacts (via N-terminus) with SLC6A3 (via N-terminus). May interact with VMAT2. As to expression, expressed in brain and placenta.

Its subcellular location is the cytoplasmic vesicle. The protein localises to the secretory vesicle. The protein resides in the synaptic vesicle membrane. It localises to the synapse. Its function is as follows. May play a role in regulated exocytosis. May indirectly regulate the activity of the plasma membrane dopamine transporter SLC6A3 and thereby regulate dopamine transport back from the synaptic cleft into the presynaptic terminal. The chain is Synaptogyrin-3 from Homo sapiens (Human).